A 259-amino-acid chain; its full sequence is uncharacterized protein (259 aa).

The protein belongs to the chlamydial CPn_0128/CT_035/TC_0305 family.

This is an uncharacterized protein from Chlamydia muridarum (strain MoPn / Nigg).